A 228-amino-acid chain; its full sequence is Urease accessory protein UreF (228 aa).

This sequence belongs to the UreF family. As to quaternary structure, ureD, UreF and UreG form a complex that acts as a GTP-hydrolysis-dependent molecular chaperone, activating the urease apoprotein by helping to assemble the nickel containing metallocenter of UreC. The UreE protein probably delivers the nickel.

It localises to the cytoplasm. Its function is as follows. Required for maturation of urease via the functional incorporation of the urease nickel metallocenter. In Dechloromonas aromatica (strain RCB), this protein is Urease accessory protein UreF.